Reading from the N-terminus, the 4022-residue chain is MLESYVTPILMSYVNRYIKNLKPSDLQLSLWGGDVVLSKLELKLDVLEQELKLPFTFLSGHIHELRIHVPWTKLGSEPVVITINTMECILKLKDGIQDDHESCGSNSTNRSTAESTKSSIKPRRMQQAAPTDPDLPPGYVQSLIRRVVNNVNIVINNLILKYVEDDIVLSVNITSAECYTVGELWDRAFMDISATDLVLRKVINFSDCTVCLDKRNASGKIEFYQDPLLYKCSFRTRLHFTYENLNSKMPSVIKIHTLVESLKLSITDQQLPMFIRIMQLGIALYYGEIGNFKEGEIEDLTCHNKDMLGNITGSEDETRIDMQYPAQHKGQELYSQQDEEQPQGWVSWAWSFVPAIVSYDDGEEDFVGNDPASTMHQQKAQTLKDPIVSIGFYCTKATVTFKLTEMQVESSYYSPQKVKSKEVLCWEQEGTTVEALMMGEPFFDCQIGFVGCRAMCLKGIMGVKDFEENMNRSETEACFFICGDNLSTKGFTYLTNSLFDYRSPENNGTRAEFILDSTHHKETYTEIAGMQRFGAFYMDYLYTMENTSGKGSTNQQDFSSGKSEDLGTVQEKSTKSLVIGPLDFRLDSSAVHRILKMIVCALEHEYEPYSRLKSDIKDENETILNPEEVALLEEYIPTRHTSVTLLKCTCTISMAEFNLLDHLLPVIMGEKNSSNFMNTTNFQSLRPLPSIRILVDKINLEHSVPMYAEQLVHVVSSLTQPSDNLLHYCYVHCYLKIFGFQAGLTSLDCSGSYCLPVPVIPSFSTALYGKLLKLPTCWTKRSQIAITEGIFELPNLTIQATRAQTLLLQAIYQSWSHLGNVSSSAVIEALINEIFLSIGVKSKNPLPTLEGSIQNVELKYCSTSLVKCASGTMGSIKICAKAPVDSGKEKLIPLLQGPSDTKDLHSTKWLNESRKPESLLAPDLMAFTIQVPQYIDYCHNSGAVLLCSIQGLAVNIDPILYTWLIYQPQKRTSRHMQQQPVVAVPLVMPVCRRKEDEVSIGSAPLAKQQSYQASEYASSPVKTKTVTESRPLSVPVKAMLNISESCRSPEERMKEFIGIVWNAVKHLTLQLEVQSCCVFIPNDSLPSPSTIVSGDIPGTVRSWYHGQTSMPGTLVLCLPQIKIISAGHKYMEPLQEIPFVIPRPILEEGDAFPWTISLHNFSIYTLLGKQVTLCLVEPMGCTSTLAVTSQKLLATGPDTRHSFVVCLHVDLESLEIKCSNPQVQLFYELTDIMNKVWNKIQKRGNLNLSPTSPETMAGPVPTSPVRSSIGTAPPDTSTCSPSADIGTTTEGDSIQAGEESPFSDSVTLEQTTSNIGGTSGRVSLWMQWVLPKITIKLFAPDPENKGTEVCMVSELEDLSASIDVQDVYTKVKCKIESFNIDHYRSSLGEECWSLGQCGGVFLSCTDKLNRRTLLVRPISKQDPFSNCSGFFPSTTTKLLDGTHQQHGFLSLTYTKAVTKNVRHKLTSRNERRSFHKLSEGLMDGSPHFLHEILLSAQAFDIVLYFPLLNAIASIFQAKLPKTQKEKRKSPGQPMRTHTLTSRNLPLIYVNTSVIRIFIPKTEEMQPTVEANQAAKEDTVVLKIGSVAMAPQADNPLGRSVLRKDIYQRALNLGILRDPGSEIEDRQYQIDLQSINIGTAQWHQLKPEKESVSGGVVTETERNSQNPALEWNMASSIRRHQERRAILTPVLTDFSVRITGAPAVIFTKVVSPENLHTEEILVCGHSLEVNITTNLDFFLSVAQVQLLHQLIVANMTGLEPSNKAAEISKQEQKKVDIFDGGMAETSSRYSGAQDSGIGSDSVKIRIVQIEQHSGASQHRIARPSRQSSIVKNLNFIPFDIFITASRISLMTYSCMALSKSKSQEQKNNEKTDKSSLNLPEVDSDVAKPNQACISTVTAEDLLRSSISFPSGKKIGVLSLESLHASTRSSARQALGITIVRQPGRRGTGDLQLEPFLYFIVSQPSLLLSCHHRKQRVEVSIFDAVLKGVASDYKCIDPGKTLPEALDYCTVWLQTVPGEIDSKSGIPPSFITLQIKDFLNGPADVNLDISKPLKANLSFTKLDQINLFLKKIKNAHSLAHSEETSAMSNTMVNKDDLPVSKYYRGKLSKPKIHGDGVQKISAQENMWRAVSCFQKISVQTTQIVISMETVPHTSKPCLLASLSNLNGSLSVKATQKVPGIILGSSFLLSINDFLLKTSLKERSRILIGPCCATANLEAKWCKHSGNPGPEQSIPKISIDLRGGLLQVFWGQEHLNCLVLLHELLNGYLNEEGNFEVQVSEPVPQMSSPVEKNQTFKSEQSSDDLRTGLFQYVQDAESLKLPGVYEVLFYNETEDCPGMMLWRYPEPRVLTLVRITPVPFNTTEDPDISTADLGDVLQVPCSLEYWDELQKVFVAFREFNLSESKVCELQLPDINLVNDQKKLVSSDLWRIVLNSSQNGADDQSSASESGSQSTCDPLVTPTALAACTRVDSCFTPWFVPSLCVSFQFAHLEFHLCHHLDQLGTAAPQYLQPFVSDRNMPSELEYMIVSFREPHMYLRQWNNGSVCQEIQFLAQADCKLLECRNVTMQSVVKPFSIFGQMAVSSDVVEKLLDCTVIVDSVFVNLGQHVVHSLNTAIQAWQQNKCPEVEELVFSHFVICNDTQETLRFGQVDTDENILLASLHSHQYSWRSHKSPQLLHICIEGWGNWRWSEPFSVDHAGTFIRTIQYRGRTASLIIKVQQLNGVQKQIIICGRQIICSYLSQSIELKVVQHYIGQDGQAVVREHFDCLTAKQKLPSYILENNELTELCVKAKGDEDWSRDVCLESKAPEYSIVIQVPSSNSSIIYVWCTVLTLEPNSQVQQRMIVFSPLFIMRSHLPDPIIIHLEKRSLGLSETQIIPGKGQEKPLQNIEPDLVHHLTFQAREEYDPSDCAVPISTSLIKQIATKVHPGGTVNQILDEFYGPEKSLQPIWPYNKKDSDRNEQLSQWDSPMRVKLSIWKPYVRTLLIELLPWALLINESKWDLWLFEGEKIVLQVPAGKIIIPPNFQEAFQIGIYWANTNTVHKSVAIKLVHNLTSPKWKDGGNGEVVTLDEEAFVDTEIRLGAFPGHQKLCQFCISSMVQQGIQIIQIEDKTTIINNTPYQIFYKPQLSVCNPHSGKEYFRVPDSATFSICPGGEQPAMKSSSLPCWDLMPDISQSVLDASLLQKQIMLGFSPAPGADSSQCWSLPAIVRPEFPRQSVAVPLGNFRENGFCTRAIVLTYQEHLGVTYLTLSEDPSPRVIIHNRCPVKMLIKENIKDIPKFEVYCKKIPSECSIHHELYHQISSYPDCKTKDLLPSLLLRVEPLDEVTTEWSDAIDINSQGTQVVFLTGFGYVYVDVVHQCGTVFITVAPEGKAGPILTNTNRAPEKIVTFKMFITQLSLAVFDDLTHHKASAELLRLTLDNIFLCVAPGAGPLPGEEPVAALFELYCVEICCGDLQLDNQLYNKSNFHFAVLVCQGEKAEPIQCSKMQSLLISNKELEEYKEKCFIKLCITLNEGKSILCDINEFSFELKPARLYVEDTFVYYIKTLFDTYLPNSRLAGHSTHLSGGKQVLPMQVTQHARALVNPVKLRKLVIQPVNLLVSIHASLKLYIASDHTPLSFSVFERGPIFTTARQLVHALAMHYAAGALFRAGWVVGSLDILGSPASLVRSIGNGVADFFRLPYEGLTRGPGAFVSGVSRGTTSFVKHISKGTLTSITNLATSLARNMDRLSLDEEHYNRQEEWRRQLPESLGEGLRQGLSRLGISLLGAIAGIVDQPMQNFQKTSEAQASAGHKAKGVISGVGKGIMGVFTKPIGGAAELVSQTGYGILHGAGLSQLPKQRHQPSDLHADQAPNSHVKYVWKMLQSLGRPEVHMALDVVLVRGSGQEHEGCLLLTSEVLFVVSVSEDTQQQAFPVTEIDCAQDSKQNNLLTVQLKQPRVACDVEVDGVRERLSEQQYNRLVDYITKTSCHLAPSCSSMQIPCPVVAAEPPPSTVKTYHYLVDPHFAQVFLSKFTMVKNKALRKGFP.

Positions 2-102 (LESYVTPILM…KDGIQDDHES (101 aa)) constitute a Chorein N-terminal domain. Residues 100–134 (HESCGSNSTNRSTAESTKSSIKPRRMQQAAPTDPD) form a disordered region. Residues 103–119 (CGSNSTNRSTAESTKSS) are compositionally biased toward polar residues. Phosphoserine is present on residues serine 414, serine 999, serine 1002, and serine 1033. The interval 1247–1314 (NLSPTSPETM…SVTLEQTTSN (68 aa)) is disordered. Composition is skewed to polar residues over residues 1264 to 1292 (PVRSSIGTAPPDTSTCSPSADIGTTTEGD) and 1302 to 1314 (FSDSVTLEQTTSN). Serine 1815 carries the phosphoserine modification. Residues 1860–1872 (KSQEQKNNEKTDK) are compositionally biased toward basic and acidic residues. Residues 1860–1880 (KSQEQKNNEKTDKSSLNLPEV) form a disordered region. Positions 2631 to 2716 (HFVICNDTQE…RTASLIIKVQ (86 aa)) constitute an SHR-BD domain. A localizes the protein to the Golgi apparatus region spans residues 3908 to 4022 (AFPVTEIDCA…KNKALRKGFP (115 aa)).

The protein belongs to the VPS13 family. In terms of assembly, interacts with STX6. Interacts with STX12. Interacts with RAB6A isoform 1 (GTP-bound) and isoform 2 (GTP-bound). Interacts with RAB6B (GTP-bound). In terms of tissue distribution, widely expressed. There is apparent differential expression of different transcripts. In fetal brain, lung, liver, and kidney, two transcripts of 2 and 5 kb are identified. These transcripts are also seen in all adult tissues analyzed. A larger transcript (12-14 kb) is expressed in prostate, testis, ovary, and colon in the adult. Expression is very low in adult brain tissue. Expressed in peripheral blood lymphocytes. Isoform 1 and isoform 2 are expressed in brain and retina. Isoform 2 is expressed ubiquitously.

It is found in the recycling endosome membrane. The protein localises to the cytoplasmic vesicle. It localises to the secretory vesicle. The protein resides in the acrosome membrane. Its subcellular location is the golgi apparatus. It is found in the cis-Golgi network membrane. The protein localises to the endoplasmic reticulum-Golgi intermediate compartment membrane. It localises to the trans-Golgi network membrane. The protein resides in the early endosome membrane. Its subcellular location is the lysosome membrane. Functionally, mediates the transfer of lipids between membranes at organelle contact sites. Binds phosphatidylinositol 3-phosphate. Functions as a tethering factor in the slow endocytic recycling pathway, to assist traffic between early and recycling endosomes. Involved in the transport of proacrosomal vesicles to the nuclear dense lamina (NDL) during spermatid development. Plays a role in the assembly of the Golgi apparatus, possibly by mediating trafficking to the Golgi membrane. Plays a role in the development of the nervous system, and may be required for neuron projection development. May also play a role during adipose tissue development. Required for maintenance of the ocular lens. This is Intermembrane lipid transfer protein VPS13B (VPS13B) from Homo sapiens (Human).